A 433-amino-acid chain; its full sequence is Enolase (433 aa).

Gln167 lines the (2R)-2-phosphoglycerate pocket. Glu209 acts as the Proton donor in catalysis. Mg(2+) is bound by residues Asp246, Glu287, and Asp314. Residues Lys339, Arg368, Ser369, and Lys390 each contribute to the (2R)-2-phosphoglycerate site. Residue Lys339 is the Proton acceptor of the active site.

Belongs to the enolase family. The cofactor is Mg(2+).

It is found in the cytoplasm. The protein localises to the secreted. The protein resides in the cell surface. It carries out the reaction (2R)-2-phosphoglycerate = phosphoenolpyruvate + H2O. It participates in carbohydrate degradation; glycolysis; pyruvate from D-glyceraldehyde 3-phosphate: step 4/5. Functionally, catalyzes the reversible conversion of 2-phosphoglycerate (2-PG) into phosphoenolpyruvate (PEP). It is essential for the degradation of carbohydrates via glycolysis. The chain is Enolase from Prochlorococcus marinus (strain NATL2A).